A 188-amino-acid polypeptide reads, in one-letter code: MSLVESINKFLSFADHDLIVYDIILGSILGGIGVSFNQASLIDDFPNIIELIIGSMMLLNKGFEPFLRSLGFVLTADGFSSLVNKVFTSEECKNCIPFDCLIAPLPADVVYANSESNDPPLIAIGPRVFFNLQKPECREYFERLQKYNEQNFYKRFIHHRYLGESIAIDPNQNQTISESEFSESTSSE.

This is an uncharacterized protein from Acidianus convivator (ABV).